The primary structure comprises 98 residues: NADH-ubiquinone oxidoreductase chain 4L (98 aa).

Helical transmembrane passes span 1 to 21, 26 to 46, and 61 to 81; these read MNLIDLILIAIYVIGISGLIF, IINILIISELNLGTLGMLFVL, and LYILTFTAAESAIGLAIVVIL.

The protein belongs to the complex I subunit 4L family.

It localises to the mitochondrion membrane. It catalyses the reaction a ubiquinone + NADH + 5 H(+)(in) = a ubiquinol + NAD(+) + 4 H(+)(out). Its function is as follows. Core subunit of the mitochondrial membrane respiratory chain NADH dehydrogenase (Complex I) that is believed to belong to the minimal assembly required for catalysis. Complex I functions in the transfer of electrons from NADH to the respiratory chain. The immediate electron acceptor for the enzyme is believed to be ubiquinone. The sequence is that of NADH-ubiquinone oxidoreductase chain 4L (nad4L) from Dictyostelium discoideum (Social amoeba).